The following is a 129-amino-acid chain: Small ribosomal subunit protein uS11 (129 aa).

Belongs to the universal ribosomal protein uS11 family. Part of the 30S ribosomal subunit. Interacts with proteins S7 and S18. Binds to IF-3.

Located on the platform of the 30S subunit, it bridges several disparate RNA helices of the 16S rRNA. Forms part of the Shine-Dalgarno cleft in the 70S ribosome. The chain is Small ribosomal subunit protein uS11 from Nitrosospira multiformis (strain ATCC 25196 / NCIMB 11849 / C 71).